The primary structure comprises 322 residues: MNKKVALITTGGTIASRKTESGRLAAGAISGPELAEMCSLPEDVQIDVYPAFQLPSMHITFQHLLELKQTIERVFQDGGYDGAVVTHGTDTLEETAYFLDLTIEDERPVVVTGSQRAPEQQGTDAYTNIRHAVYTACSPDIKGAGTVVVFNERIFNARYVKKVHASNLQGFDVFGFGYLGIIDNDKVYVYQKLLKRDVHQLQRPLPAVDIVKCYLDGDGKFIRAAVREGVEGIVLEGVGRGQVPPNMMADIEQALNQGVYIVITTSAEEGEVYTTYDYAGSSYDLAKKGVILGKDYDSKKARMKLAVLLASYKEGIKDKFCY.

Residues 3–322 (KKVALITTGG…KEGIKDKFCY (320 aa)) enclose the Asparaginase/glutaminase domain. Threonine 13 (O-isoaspartyl threonine intermediate) is an active-site residue. Residues serine 56 and 89–90 (TD) each bind substrate.

Belongs to the asparaginase 1 family. As to quaternary structure, homotetramer.

The protein resides in the cytoplasm. The catalysed reaction is L-asparagine + H2O = L-aspartate + NH4(+). The sequence is that of L-asparaginase (ansA) from Bacillus licheniformis.